A 171-amino-acid chain; its full sequence is Co-chaperone protein HscB (171 aa).

The J domain occupies 2 to 74; that stretch reads DYFTLFGLPA…LTRAEYLLSL (73 aa).

It belongs to the HscB family. As to quaternary structure, interacts with HscA and stimulates its ATPase activity. Interacts with IscU.

Functionally, co-chaperone involved in the maturation of iron-sulfur cluster-containing proteins. Seems to help targeting proteins to be folded toward HscA. This chain is Co-chaperone protein HscB, found in Klebsiella pneumoniae subsp. pneumoniae (strain ATCC 700721 / MGH 78578).